A 407-amino-acid chain; its full sequence is Cytochrome P450-pinF2, plant-inducible (407 aa).

Cys-356 provides a ligand contact to heme.

The protein belongs to the cytochrome P450 family. It depends on heme as a cofactor.

Its function is as follows. Not essential for virulence, but may be involved in the detoxification of plant protective agents at the site of wounding. This is Cytochrome P450-pinF2, plant-inducible (cyp104) from Rhizobium radiobacter (Agrobacterium tumefaciens).